Here is a 1071-residue protein sequence, read N- to C-terminus: Ubiquitin carboxyl-terminal hydrolase 7 (1071 aa).

The tract at residues 467–532 is disordered; the sequence is KARLQQEQQQ…MPTTPEIPPP (66 aa). Residues 471 to 480 show a composition bias toward low complexity; that stretch reads QQEQQQQQQQ. The segment covering 481–495 has biased composition (polar residues); that stretch reads PDSQDSFSAKESSTK. Pro residues-rich tracts occupy residues 497–507 and 516–532; these read PEPPSWKPPDL and PPPP…IPPP. The USP domain maps to 609–1069; sequence TGLRNLGNTC…DVYVLFYERV (461 aa). The active-site Nucleophile is the Cys618. Positions 913 to 942 are disordered; the sequence is RMLGGSGKRSSSSTPFSTGGNDSNNSSDYK. A compositionally biased stretch (polar residues) spans 920-932; the sequence is KRSSSSTPFSTGG. The Proton acceptor role is filled by His1014.

Belongs to the peptidase C19 family.

It is found in the cytoplasm. The enzyme catalyses Thiol-dependent hydrolysis of ester, thioester, amide, peptide and isopeptide bonds formed by the C-terminal Gly of ubiquitin (a 76-residue protein attached to proteins as an intracellular targeting signal).. Functionally, involved in the sorting of ubiquitinated cargo proteins at the multivesicular body (MVB). The sequence is that of Ubiquitin carboxyl-terminal hydrolase 7 (UBP7) from Saccharomyces cerevisiae (strain ATCC 204508 / S288c) (Baker's yeast).